We begin with the raw amino-acid sequence, 65 residues long: UPF0434 protein Mmwyl1_2153 (65 aa).

Belongs to the UPF0434 family.

This Marinomonas sp. (strain MWYL1) protein is UPF0434 protein Mmwyl1_2153.